The primary structure comprises 86 residues: Kappa-theraphotoxin-Cg1a 4 (86 aa).

Residues 1–21 (MKASVLITLAVLGVMFVWASA) form the signal peptide. Positions 22 to 50 (AELEERGSDQRDSPAWLKSMERIFQSEER) are excised as a propeptide. Intrachain disulfides connect cysteine 52/cysteine 66, cysteine 59/cysteine 71, and cysteine 65/cysteine 78. Residue phenylalanine 84 is modified to Phenylalanine amide.

This sequence belongs to the neurotoxin 10 (Hwtx-1) family. 28 (Jztx-11) subfamily. Expressed by the venom gland.

It is found in the secreted. In terms of biological role, this toxin acts as a voltage-dependent gating-modifier. It inhibits the sodium conductance (IC(50)=124 nM) and slows the fast inactivation (EC(50)=1180 nM) of Nav1.5/SCN5A. It significantly shifts the activation to more depolarized voltages and decreases the deactivation of Nav1.5 currents upon extreme depolarization, but only slightly affects voltage-dependence of steady-state inactivation. In addition, this toxin causes an approximately five-fold decrease in the rate of recovery from inactivation and an approximately 1.9-fold reduction in the closed-state inactivation rate. This toxin integrates the functions of site 3 toxins (alpha-scorpion toxins) with site 4 toxins (beta-scorpion and spider toxins) by targeting multiple sites on Nav1.5. Also shows inhibition of voltage-gated potassium channels (5 uM completely inhibits Kv2.1/KCNB1, whereas 5 uM moderately inhibits Kv4.2/KCND2 Kv4.1/KCND1 channels). The protein is Kappa-theraphotoxin-Cg1a 4 of Chilobrachys guangxiensis (Chinese earth tiger tarantula).